A 278-amino-acid chain; its full sequence is uncharacterized protein (278 aa).

It is found in the cytoplasm. Its subcellular location is the nucleus. Probable methyltransferase. This is an uncharacterized protein from Schizosaccharomyces pombe (strain 972 / ATCC 24843) (Fission yeast).